Consider the following 363-residue polypeptide: Dihydroorotate dehydrogenase (quinone) (363 aa).

FMN is bound by residues 67–71 and Thr91; that span reads AGLDK. Lys71 provides a ligand contact to substrate. Substrate is bound at residue 116–120; sequence NRMGF. 2 residues coordinate FMN: Asn145 and Asn178. Substrate is bound at residue Asn178. Residue Ser181 is the Nucleophile of the active site. Asn183 is a binding site for substrate. FMN-binding residues include Lys219 and Thr247. 248 to 249 lines the substrate pocket; the sequence is NT. FMN is bound by residues Gly268, Gly297, and 318–319; that span reads YT.

This sequence belongs to the dihydroorotate dehydrogenase family. Type 2 subfamily. In terms of assembly, monomer. It depends on FMN as a cofactor.

It localises to the cell membrane. It catalyses the reaction (S)-dihydroorotate + a quinone = orotate + a quinol. Its pathway is pyrimidine metabolism; UMP biosynthesis via de novo pathway; orotate from (S)-dihydroorotate (quinone route): step 1/1. Catalyzes the conversion of dihydroorotate to orotate with quinone as electron acceptor. The protein is Dihydroorotate dehydrogenase (quinone) of Myxococcus xanthus (strain DK1622).